Here is a 576-residue protein sequence, read N- to C-terminus: Arginine--tRNA ligase (576 aa).

A 'HIGH' region motif is present at residues 132 to 142 (ANPTGPMHIGH).

This sequence belongs to the class-I aminoacyl-tRNA synthetase family. As to quaternary structure, monomer.

The protein resides in the cytoplasm. It catalyses the reaction tRNA(Arg) + L-arginine + ATP = L-arginyl-tRNA(Arg) + AMP + diphosphate. The sequence is that of Arginine--tRNA ligase from Ehrlichia ruminantium (strain Gardel).